We begin with the raw amino-acid sequence, 578 residues long: Vitelline membrane-like protein (578 aa).

A signal peptide spans Met-1–Ser-21. A 45 X 8 AA approximate tandem repeats of [PS]-[AS]-Y-S-A-P-A-[AS] region spans residues Gln-72–Ser-452. Disordered regions lie at residues Ala-133–Pro-442 and Ser-487–Ser-514. Residues Ser-549–Tyr-578 enclose the VM domain.

As to quaternary structure, interacts with Vm26Aa and Vm26Ab; forms part of a disulfide-linked network within the vitelline membrane of stage 10 egg chambers. Post-translationally, becomes part of a disulfide-linked network including other vitelline membrane proteins, including Vm26Aa and Vm26Ab, during vitelline membrane biogenesis and maturation. Sulfated by pip; probably involved in embryo dorsal-ventral axis determination. Sulfation by pip may occur on covalently bound glycosaminoglycans. Secreted into the perivitelline space and becomes stably incorporated into the vitelline membrane (at protein level). Expressed throughout the follicle cell layer of stage 10 egg chambers.

The protein localises to the secreted. It localises to the extracellular space. It is found in the extracellular matrix. Major early eggshell protein secreted by folicle cells into the perivitelline space and incorporated into the vitelline membrane. Localized sulfation by pip may be involved in embryo dorsal-ventral axis determination. The polypeptide is Vitelline membrane-like protein (Drosophila melanogaster (Fruit fly)).